The chain runs to 591 residues: UvrABC system protein C (591 aa).

The GIY-YIG domain occupies 14-91; the sequence is DSPGCYLHKD…IQKNMPKYNI (78 aa). The UVR domain occupies 196-231; the sequence is DKIVTGLKEKMLAASQAMEFERAAEYRDLISGIATL.

The protein belongs to the UvrC family. In terms of assembly, interacts with UvrB in an incision complex.

Its subcellular location is the cytoplasm. The UvrABC repair system catalyzes the recognition and processing of DNA lesions. UvrC both incises the 5' and 3' sides of the lesion. The N-terminal half is responsible for the 3' incision and the C-terminal half is responsible for the 5' incision. The sequence is that of UvrABC system protein C from Streptococcus uberis (strain ATCC BAA-854 / 0140J).